The primary structure comprises 1159 residues: Reverse gyrase 2 (1159 aa).

An RG N-terminal-type zinc finger spans residues 1–40 (MALELIERGCPNCGGVISSDRLEKGLPCSKCLPKPTEEKV). Residues C10, C13, C28, and C31 each contribute to the Zn(2+) site. Residues Q82 and 99 to 106 (APTGVGKT) contribute to the ATP site. The Helicase ATP-binding domain maps to 86–275 (AKRVFMNQSF…LFRNLLGFDV (190 aa)). A DEAD box motif is present at residues 196–199 (DDID). The interval 583–1159 (DLFKTTLVIV…LLKEEKAFKK (577 aa)) is topoisomerase I. A Toprim domain is found at 587–743 (TTLVIVESPN…NIKRAEFHEV (157 aa)). Mg(2+)-binding residues include E593 and D712. One can recognise a Topo IA-type catalytic domain in the interval 759 to 1152 (DLNLVKAQLV…EVHRIKVLLK (394 aa)). Y902 functions as the O-(5'-phospho-DNA)-tyrosine intermediate in the catalytic mechanism.

In the N-terminal section; belongs to the DEAD box helicase family. DDVD subfamily. This sequence in the C-terminal section; belongs to the type IA topoisomerase family. As to quaternary structure, monomer. Zn(2+) serves as cofactor. It depends on Mg(2+) as a cofactor.

The protein localises to the cytoplasm. The enzyme catalyses ATP + H2O = ADP + phosphate + H(+). Functionally, modifies the topological state of DNA by introducing positive supercoils in an ATP-dependent process, increasing the linking number in steps of +1. Binds to single-stranded DNA, transiently cleaves and then rejoins the ends, introducing a positive supercoil in the process. The scissile phosphodiester is attacked by the catalytic tyrosine of the enzyme, resulting in the formation of a DNA-(5'-phosphotyrosyl)-enzyme intermediate. Probably involved in rewinding DNA strands in regions of the chromosome that have opened up to allow replication, transcription, DNA repair and/or for DNA protection. The polypeptide is Reverse gyrase 2 (Aquifex aeolicus (strain VF5)).